Here is a 162-residue protein sequence, read N- to C-terminus: Cytochrome c-type biogenesis protein CcmE (162 aa).

At methionine 1–arginine 8 the chain is on the cytoplasmic side. Residues leucine 9 to alanine 29 traverse the membrane as a helical; Signal-anchor for type II membrane protein segment. At leucine 30 to lysine 162 the chain is on the periplasmic side. Positions 131 and 135 each coordinate heme. The tract at residues glutamate 142–lysine 162 is disordered. Polar residues predominate over residues tyrosine 153–lysine 162.

Belongs to the CcmE/CycJ family.

It localises to the cell inner membrane. Heme chaperone required for the biogenesis of c-type cytochromes. Transiently binds heme delivered by CcmC and transfers the heme to apo-cytochromes in a process facilitated by CcmF and CcmH. The polypeptide is Cytochrome c-type biogenesis protein CcmE (Shewanella baltica (strain OS223)).